Reading from the N-terminus, the 269-residue chain is Phosphonoacetaldehyde hydrolase (269 aa).

Asp-10 (nucleophile) is an active-site residue. Mg(2+) contacts are provided by Asp-10 and Ala-12. Catalysis depends on Lys-52, which acts as the Schiff-base intermediate with substrate. Asp-186 is a binding site for Mg(2+).

The protein belongs to the HAD-like hydrolase superfamily. PhnX family. Homodimer. Mg(2+) is required as a cofactor.

It carries out the reaction phosphonoacetaldehyde + H2O = acetaldehyde + phosphate + H(+). Involved in phosphonate degradation. This is Phosphonoacetaldehyde hydrolase from Salmonella heidelberg (strain SL476).